A 140-amino-acid polypeptide reads, in one-letter code: Thioredoxin H9 (140 aa).

G2 is lipidated: N-myristoyl glycine. Residue C4 is the site of S-palmitoyl cysteine attachment. S14 is subject to Phosphoserine. A Thioredoxin domain is found at 25 to 129 (VHLITTKESW…PELQKKVTSI (105 aa)). Residues C57 and C60 each act as nucleophile in the active site. Cysteines 57 and 60 form a disulfide. S136 carries the phosphoserine modification.

The protein belongs to the thioredoxin family. Plant H-type subfamily. In terms of tissue distribution, ubiquitous.

It is found in the cell membrane. In terms of biological role, probable thiol-disulfide oxidoreductase that may play a role in intercellular communication due to its ability to move from cell to cell. This is Thioredoxin H9 (TRX9) from Arabidopsis thaliana (Mouse-ear cress).